Consider the following 558-residue polypeptide: Delta-1-pyrroline-5-carboxylate dehydrogenase, mitochondrial (558 aa).

Residues serine 198, lysine 223, and 276 to 280 (GSTGV) contribute to the NAD(+) site. Residue glutamate 306 is the Proton acceptor of the active site. The active-site Nucleophile is cysteine 340. NAD(+) is bound at residue glutamate 438.

This sequence belongs to the aldehyde dehydrogenase family.

Its subcellular location is the mitochondrion matrix. The enzyme catalyses L-glutamate 5-semialdehyde + NAD(+) + H2O = L-glutamate + NADH + 2 H(+). It participates in amino-acid degradation; L-proline degradation into L-glutamate; L-glutamate from L-proline: step 2/2. Functionally, irreversible conversion of delta-1-pyrroline-5-carboxylate (P5C), derived either from proline or ornithine, to glutamate. This is a necessary step in the pathway interconnecting the urea and tricarboxylic acid cycles. This Dictyostelium discoideum (Social amoeba) protein is Delta-1-pyrroline-5-carboxylate dehydrogenase, mitochondrial.